An 86-amino-acid chain; its full sequence is Translation initiation factor IF-1 2 (86 aa).

Residues Met1–Lys72 enclose the S1-like domain.

It belongs to the IF-1 family. As to quaternary structure, component of the 30S ribosomal translation pre-initiation complex which assembles on the 30S ribosome in the order IF-2 and IF-3, IF-1 and N-formylmethionyl-tRNA(fMet); mRNA recruitment can occur at any time during PIC assembly.

The protein localises to the cytoplasm. In terms of biological role, one of the essential components for the initiation of protein synthesis. Stabilizes the binding of IF-2 and IF-3 on the 30S subunit to which N-formylmethionyl-tRNA(fMet) subsequently binds. Helps modulate mRNA selection, yielding the 30S pre-initiation complex (PIC). Upon addition of the 50S ribosomal subunit IF-1, IF-2 and IF-3 are released leaving the mature 70S translation initiation complex. The protein is Translation initiation factor IF-1 2 of Aromatoleum aromaticum (strain DSM 19018 / LMG 30748 / EbN1) (Azoarcus sp. (strain EbN1)).